Consider the following 413-residue polypeptide: N-acylneuraminate cytidylyltransferase (413 aa).

This sequence belongs to the CMP-NeuNAc synthase family. It depends on Mg(2+) as a cofactor. Mn(2+) serves as cofactor.

It is found in the cytoplasm. It carries out the reaction an N-acylneuraminate + CTP = a CMP-N-acyl-beta-neuraminate + diphosphate. Functionally, catalyzes the formation of CMP-N-acetylneuraminic acid (CMP-NeuNAc), which is essential for the formation of the capsule. The sequence is that of N-acylneuraminate cytidylyltransferase (neuA) from Streptococcus agalactiae serotype Ia (strain ATCC 27591 / A909 / CDC SS700).